The sequence spans 360 residues: 45 kDa calcium-binding protein (360 aa).

The signal sequence occupies residues 1 to 29 (MVSKQAFLFSLGSLYLSLLFIFLLMDVYA). The N-linked (GlcNAc...) asparagine glycan is linked to asparagine 33. EF-hand domains follow at residues 96 to 131 (RNRR…KTEE), 135 to 170 (EAVN…SKGF), 231 to 266 (MLKF…TVEN), 276 to 311 (WVRD…MNEY), and 312 to 347 (NALN…FTGS). Positions 109, 111, 113, 115, 120, 148, 150, 152, 154, 159, 244, 246, 248, 250, 255, 289, 291, 293, 300, 325, 327, 329, and 336 each coordinate Ca(2+).

The protein belongs to the CREC family.

Its subcellular location is the golgi apparatus lumen. In terms of biological role, may regulate calcium-dependent activities in the endoplasmic reticulum lumen or post-ER compartment. The protein is 45 kDa calcium-binding protein (sdf4) of Xenopus laevis (African clawed frog).